Here is a 106-residue protein sequence, read N- to C-terminus: Iron-sulfur cluster assembly protein CyaY (106 aa).

This sequence belongs to the frataxin family.

Its function is as follows. Involved in iron-sulfur (Fe-S) cluster assembly. May act as a regulator of Fe-S biogenesis. This Colwellia psychrerythraea (strain 34H / ATCC BAA-681) (Vibrio psychroerythus) protein is Iron-sulfur cluster assembly protein CyaY.